The chain runs to 137 residues: Putative pre-16S rRNA nuclease (137 aa).

This sequence belongs to the YqgF nuclease family.

Its subcellular location is the cytoplasm. Functionally, could be a nuclease involved in processing of the 5'-end of pre-16S rRNA. This is Putative pre-16S rRNA nuclease from Anaeromyxobacter sp. (strain K).